The sequence spans 465 residues: Ribulose bisphosphate carboxylase large chain (465 aa).

Lys-4 carries the N6,N6,N6-trimethyllysine modification. 2 residues coordinate substrate: Asn-113 and Thr-163. Lys-165 serves as the catalytic Proton acceptor. Lys-167 is a binding site for substrate. Mg(2+) contacts are provided by Lys-191, Asp-193, and Glu-194. Lys-191 is modified (N6-carboxylysine). His-284 functions as the Proton acceptor in the catalytic mechanism. The substrate site is built by Arg-285, His-317, and Ser-369.

The protein belongs to the RuBisCO large chain family. Type I subfamily. In terms of assembly, heterohexadecamer of 8 large chains and 8 small chains; disulfide-linked. The disulfide link is formed within the large subunit homodimers. Requires Mg(2+) as cofactor. The disulfide bond which can form in the large chain dimeric partners within the hexadecamer appears to be associated with oxidative stress and protein turnover.

It is found in the plastid. The protein localises to the chloroplast. The catalysed reaction is 2 (2R)-3-phosphoglycerate + 2 H(+) = D-ribulose 1,5-bisphosphate + CO2 + H2O. It carries out the reaction D-ribulose 1,5-bisphosphate + O2 = 2-phosphoglycolate + (2R)-3-phosphoglycerate + 2 H(+). Its function is as follows. RuBisCO catalyzes two reactions: the carboxylation of D-ribulose 1,5-bisphosphate, the primary event in carbon dioxide fixation, as well as the oxidative fragmentation of the pentose substrate in the photorespiration process. Both reactions occur simultaneously and in competition at the same active site. The protein is Ribulose bisphosphate carboxylase large chain of Epacris sp.